The following is a 341-amino-acid chain: UDP-N-acetylenolpyruvoylglucosamine reductase (341 aa).

An FAD-binding PCMH-type domain is found at 13–185 (FGVEQSCLSM…TAVGLRLPKA (173 aa)). Arg161 is an active-site residue. Ser231 (proton donor) is an active-site residue. Glu327 is a catalytic residue.

This sequence belongs to the MurB family. FAD is required as a cofactor.

It is found in the cytoplasm. The enzyme catalyses UDP-N-acetyl-alpha-D-muramate + NADP(+) = UDP-N-acetyl-3-O-(1-carboxyvinyl)-alpha-D-glucosamine + NADPH + H(+). It functions in the pathway cell wall biogenesis; peptidoglycan biosynthesis. Its function is as follows. Cell wall formation. The sequence is that of UDP-N-acetylenolpyruvoylglucosamine reductase from Shewanella sp. (strain MR-7).